The sequence spans 149 residues: Calmodulin (149 aa).

Residue Thr-2 is modified to N-acetylthreonine. EF-hand domains follow at residues 8–43, 44–79, 81–116, and 117–149; these read EQIAEFKEAFSLFDKDGDGTITTKELGTVMRSLGQN, PTEAELQDMINEVDADGNGTIDFPEFLTMMARKMKE, DSEEEIREAFRVFDKDGNGFISAAELRHVMTNLGEK, and LTDEEVDEMIREADIDGDGQVNYEEFVAMMTSK. Residues Asp-21, Asp-23, Asp-25, Thr-27, Glu-32, Asp-57, Asp-59, Asn-61, Thr-63, Glu-68, Asp-94, Asp-96, Asn-98, and Glu-105 each contribute to the Ca(2+) site. At Lys-116 the chain carries N6,N6,N6-trimethyllysine. Ca(2+)-binding residues include Asp-130, Asp-132, Asp-134, Gln-136, and Glu-141.

This sequence belongs to the calmodulin family.

Calmodulin mediates the control of a large number of enzymes, ion channels and other proteins by Ca(2+). Among the enzymes to be stimulated by the calmodulin-Ca(2+) complex are a number of protein kinases and phosphatases. This Halichondria okadai (Marine sponge) protein is Calmodulin.